The primary structure comprises 105 residues: Vacuolar ATPase assembly integral membrane protein VMA21 homolog (105 aa).

Positions 1 to 26 (MSTKNKKAAGGNGGAPKQTRQQSHDS) are disordered. Over 1–36 (MSTKNKKAAGGNGGAPKQTRQQSHDSQDYSSFKTVL) the chain is Cytoplasmic. A helical membrane pass occupies residues 37-57 (FYCMLIVFLPVLTFFVLKGFV). The Lumenal segment spans residues 58 to 68 (LDQFLNISEVK). Residues 69 to 89 (VNIASAVGAVVALHIALGLYI) form a helical membrane-spanning segment. Topologically, residues 90–105 (YRAYFGAPGSKGSKTD) are cytoplasmic.

The protein belongs to the VMA21 family.

The protein resides in the endoplasmic reticulum membrane. It is found in the endoplasmic reticulum-Golgi intermediate compartment membrane. It localises to the cytoplasmic vesicle. Its subcellular location is the COPII-coated vesicle membrane. Its function is as follows. Required for the assembly of the V0 complex of the vacuolar ATPase (V-ATPase) in the endoplasmic reticulum. The polypeptide is Vacuolar ATPase assembly integral membrane protein VMA21 homolog (Drosophila sechellia (Fruit fly)).